Reading from the N-terminus, the 323-residue chain is tRNA U34 carboxymethyltransferase (323 aa).

Carboxy-S-adenosyl-L-methionine is bound by residues lysine 91, tryptophan 105, lysine 110, glycine 130, 152 to 154 (DPT), 181 to 182 (IE), methionine 196, tyrosine 200, and arginine 315.

The protein belongs to the class I-like SAM-binding methyltransferase superfamily. CmoB family. In terms of assembly, homotetramer.

The enzyme catalyses carboxy-S-adenosyl-L-methionine + 5-hydroxyuridine(34) in tRNA = 5-carboxymethoxyuridine(34) in tRNA + S-adenosyl-L-homocysteine + H(+). Functionally, catalyzes carboxymethyl transfer from carboxy-S-adenosyl-L-methionine (Cx-SAM) to 5-hydroxyuridine (ho5U) to form 5-carboxymethoxyuridine (cmo5U) at position 34 in tRNAs. This is tRNA U34 carboxymethyltransferase from Escherichia coli O157:H7.